The following is a 162-amino-acid chain: MKVRILTVGNKMPKWVQTGFDEYHKRIQPMLTTEVVEIAAAKRAKNPSDANLAQYREQEGQAILAAHAVAGREQLWVLDVKGKMLSTENLADKLSDGMQQGDDIALVIGGADGVSPEVLAKADVKWSLSALTLPHPLVRVVLMEQLYRAMSINHNHPYHRGN.

Residues Leu78, Gly109, and 128-133 each bind S-adenosyl-L-methionine; that span reads LSALTL.

Belongs to the RNA methyltransferase RlmH family. Homodimer.

The protein localises to the cytoplasm. It carries out the reaction pseudouridine(1915) in 23S rRNA + S-adenosyl-L-methionine = N(3)-methylpseudouridine(1915) in 23S rRNA + S-adenosyl-L-homocysteine + H(+). Functionally, specifically methylates the pseudouridine at position 1915 (m3Psi1915) in 23S rRNA. This Psychrobacter cryohalolentis (strain ATCC BAA-1226 / DSM 17306 / VKM B-2378 / K5) protein is Ribosomal RNA large subunit methyltransferase H.